Consider the following 462-residue polypeptide: tRNA modification GTPase MnmE (462 aa).

The (6S)-5-formyl-5,6,7,8-tetrahydrofolate site is built by R27, E89, and R128. The region spanning 224 to 383 (GLATAIVGRP…LDERIAKLFF (160 aa)) is the TrmE-type G domain. N234 provides a ligand contact to K(+). Residues 234–239 (NVGKSS), 253–259 (TDVAGTT), and 278–281 (DTAG) contribute to the GTP site. Residue S238 participates in Mg(2+) binding. K(+)-binding residues include T253, V255, and T258. Mg(2+) is bound at residue T259. K462 is a (6S)-5-formyl-5,6,7,8-tetrahydrofolate binding site.

The protein belongs to the TRAFAC class TrmE-Era-EngA-EngB-Septin-like GTPase superfamily. TrmE GTPase family. Homodimer. Heterotetramer of two MnmE and two MnmG subunits. Requires K(+) as cofactor.

It localises to the cytoplasm. Its function is as follows. Exhibits a very high intrinsic GTPase hydrolysis rate. Involved in the addition of a carboxymethylaminomethyl (cmnm) group at the wobble position (U34) of certain tRNAs, forming tRNA-cmnm(5)s(2)U34. The chain is tRNA modification GTPase MnmE from Lacticaseibacillus paracasei (strain ATCC 334 / BCRC 17002 / CCUG 31169 / CIP 107868 / KCTC 3260 / NRRL B-441) (Lactobacillus paracasei).